Reading from the N-terminus, the 333-residue chain is Holliday junction branch migration complex subunit RuvB (333 aa).

Positions Met-1 to Tyr-181 are large ATPase domain (RuvB-L). ATP is bound by residues Leu-20, Arg-21, Gly-62, Lys-65, Thr-66, Thr-67, Glu-128–Tyr-130, Arg-171, Tyr-181, and Arg-218. Position 66 (Thr-66) interacts with Mg(2+). Residues Tyr-130–Asp-148 form a presensor-1 beta-hairpin region. The interval Glu-182–Asp-252 is small ATPAse domain (RuvB-S). A head domain (RuvB-H) region spans residues His-255 to Asn-333. Residues Arg-291, Arg-310, Arg-312, and Arg-315 each contribute to the DNA site.

Belongs to the RuvB family. As to quaternary structure, homohexamer. Forms an RuvA(8)-RuvB(12)-Holliday junction (HJ) complex. HJ DNA is sandwiched between 2 RuvA tetramers; dsDNA enters through RuvA and exits via RuvB. Only 4 subunits contact one DNA strand at any time. Two adjacent subunits are contacted by domain III of RuvA. An RuvB hexamer assembles on each DNA strand where it exits the tetramer. Each RuvB hexamer is contacted by two RuvA subunits (via domain III) on 2 adjacent RuvB subunits; this complex drives branch migration. In the full resolvosome a probable DNA-RuvA(4)-RuvB(12)-RuvC(2) complex forms which resolves the HJ.

The protein localises to the cytoplasm. It catalyses the reaction ATP + H2O = ADP + phosphate + H(+). Binding of domain III of RuvA to a single subunit of the RuvB hexamer activates the ATPase 2 subunits away and nucleotide exchange in the adjacent subunit. Functionally, the RuvA-RuvB-RuvC complex processes Holliday junction (HJ) DNA during genetic recombination and DNA repair, while the RuvA-RuvB complex plays an important role in the rescue of blocked DNA replication forks via replication fork reversal (RFR). Catalyzes branch migration on Holliday junction (HJ) DNA in complex with RuvA from S.typhimurim and ATP. RuvA specifically binds to HJ cruciform DNA, conferring on it an open structure. The RuvB hexamer acts as an ATP-dependent pump, pulling dsDNA into and through the RuvAB complex. Forms 2 homohexamers on either side of HJ DNA bound by 1 or 2 RuvA tetramers; 4 subunits per hexamer contact DNA at a time. Coordinated motions by a converter formed by DNA-disengaged RuvB subunits stimulates ATP hydrolysis and nucleotide exchange. Immobilization of the converter enables RuvB to convert the ATP-contained energy into a lever motion, pulling 2 nucleotides of DNA out of the RuvA tetramer per ATP hydrolyzed, thus driving DNA branch migration. The RuvB motors rotate together with the DNA substrate, which together with the progressing nucleotide cycle forms the mechanistic basis for DNA recombination by continuous branch migration. Branch migration allows RuvC to scan DNA until it finds its consensus sequence, where it cleaves and resolves cruciform DNA. The sequence is that of Holliday junction branch migration complex subunit RuvB from Streptococcus thermophilus (strain ATCC BAA-250 / LMG 18311).